Here is a 249-residue protein sequence, read N- to C-terminus: Zinc finger AN1 and C2H2 domain-containing stress-associated protein 13 (249 aa).

AN1-type zinc fingers lie at residues 7–55 and 95–145; these read PDLG…RGDV and AVKK…KPES. Residues cysteine 13, cysteine 18, cysteine 28, cysteine 31, cysteine 36, histidine 39, histidine 45, cysteine 47, cysteine 101, cysteine 106, cysteine 118, cysteine 121, cysteine 126, histidine 129, histidine 135, and cysteine 137 each contribute to the Zn(2+) site. The disordered stretch occupies residues 194 to 213; the sequence is FASGNDGNSEKTQERNGKQN. Positions 201 to 210 are enriched in basic and acidic residues; that stretch reads NSEKTQERNG. The C2H2-type zinc finger occupies 220–243; that stretch reads DVCPKCSRGFRDPVDLLKHIDKDH.

May be involved in environmental stress response. The chain is Zinc finger AN1 and C2H2 domain-containing stress-associated protein 13 (SAP13) from Arabidopsis thaliana (Mouse-ear cress).